A 345-amino-acid chain; its full sequence is S-adenosylmethionine:tRNA ribosyltransferase-isomerase (345 aa).

This sequence belongs to the QueA family. In terms of assembly, monomer.

The protein localises to the cytoplasm. It catalyses the reaction 7-aminomethyl-7-carbaguanosine(34) in tRNA + S-adenosyl-L-methionine = epoxyqueuosine(34) in tRNA + adenine + L-methionine + 2 H(+). The protein operates within tRNA modification; tRNA-queuosine biosynthesis. Transfers and isomerizes the ribose moiety from AdoMet to the 7-aminomethyl group of 7-deazaguanine (preQ1-tRNA) to give epoxyqueuosine (oQ-tRNA). The protein is S-adenosylmethionine:tRNA ribosyltransferase-isomerase of Helicobacter pylori (strain HPAG1).